A 136-amino-acid chain; its full sequence is MIRFLRNNALYFAWLICSTGTVMSIYYSYLLNIEPCVLCYYQRICLFPLSIILGIATYREDNLVKIYALPLSITGMVIAVYQICLQEISGMTIDICGRVSCSTKLFVFGFITVPMASALAFCAISCLLILSGSKKK.

The helical transmembrane segment at 7 to 26 (NNALYFAWLICSTGTVMSIY) threads the bilayer. Cysteine 36 and cysteine 39 are disulfide-bonded. 2 helical membrane passes run 41–60 (YQRI…TYRE) and 67–84 (YALP…YQIC). A disulfide bond links cysteine 96 and cysteine 101. A helical membrane pass occupies residues 109-133 (GFITVPMASALAFCAISCLLILSGS).

The protein belongs to the DsbB family. BdbC subfamily.

The protein resides in the cell inner membrane. In terms of biological role, required for disulfide bond formation in some proteins. The chain is Probable disulfide formation protein from Chlamydia caviae (strain ATCC VR-813 / DSM 19441 / 03DC25 / GPIC) (Chlamydophila caviae).